Consider the following 316-residue polypeptide: Acetyl-coenzyme A carboxylase carboxyl transferase subunit beta (316 aa).

The 270-residue stretch at 29–298 (LWTKCPNCGV…LLSPLNSHHH (270 aa)) folds into the CoA carboxyltransferase N-terminal domain. Zn(2+)-binding residues include cysteine 33, cysteine 36, cysteine 52, and cysteine 55. The segment at 33–55 (CPNCGVLAYTKDLLANQLVCLDC) adopts a C4-type zinc-finger fold.

The protein belongs to the AccD/PCCB family. In terms of assembly, acetyl-CoA carboxylase is a heterohexamer composed of biotin carboxyl carrier protein (AccB), biotin carboxylase (AccC) and two subunits each of ACCase subunit alpha (AccA) and ACCase subunit beta (AccD). The cofactor is Zn(2+).

It localises to the cytoplasm. The enzyme catalyses N(6)-carboxybiotinyl-L-lysyl-[protein] + acetyl-CoA = N(6)-biotinyl-L-lysyl-[protein] + malonyl-CoA. Its pathway is lipid metabolism; malonyl-CoA biosynthesis; malonyl-CoA from acetyl-CoA: step 1/1. Functionally, component of the acetyl coenzyme A carboxylase (ACC) complex. Biotin carboxylase (BC) catalyzes the carboxylation of biotin on its carrier protein (BCCP) and then the CO(2) group is transferred by the transcarboxylase to acetyl-CoA to form malonyl-CoA. The protein is Acetyl-coenzyme A carboxylase carboxyl transferase subunit beta of Microcystis aeruginosa (strain NIES-843 / IAM M-2473).